The following is a 462-amino-acid chain: Ketoisovalerate reductase (462 aa).

The tract at residues 34 to 55 (PTAVKPDRADRGDFDPGKYPVD) is disordered. A compositionally biased stretch (basic and acidic residues) spans 38–49 (KPDRADRGDFDP). NADP(+) is bound at residue 72 to 77 (GPGNVG). A Calmoduling-binding motif is present at residues 167 to 184 (ADRLRRYLGRCSSVVFAQ). Lysine 290 acts as the Proton donor in catalysis. Substrate-binding residues include asparagine 294, asparagine 298, and serine 403. Glutamate 415 lines the NADP(+) pocket.

This sequence belongs to the ketopantoate reductase family. In terms of assembly, homodimer. Binds to calmodulin in a calcium-independent manner.

It catalyses the reaction (R)-2-hydroxy-3-methylbutanoate + NADP(+) = 3-methyl-2-oxobutanoate + NADPH + H(+). With respect to regulation, environmental stimuli such as light and salt stress suppress activity through stimulation of calmodulin (CaM) that binds BEA2 and probably impairs its dimerization. In terms of biological role, ketoisovalerate reductase; part of the gene cluster that mediates the biosynthesis of beauvericin (BEA), a non-ribosomal cyclic hexadepsipeptide that shows antibiotic, antifungal, insecticidal, and cancer cell antiproliferative and antihaptotactic activity. Ketoisovalerate reductase BEA2 catalyzes the NADPH-specific reduction of ketoisovaleric acid to hydroxyisovalerate, a precursor for beauvericin biosynthesis. The nonribosomal cyclodepsipeptide synthetase BEA1 then catalyzes the formation of beauvericin via condensation and cyclization of 3 dipeptidol monomers, each composed of one unit of hydroxyisovalerate and one unit of N-methyl-phenylalanine. The protein is Ketoisovalerate reductase of Beauveria bassiana (White muscardine disease fungus).